The primary structure comprises 203 residues: uncharacterized protein (203 aa).

This sequence belongs to the DadA oxidoreductase family.

In terms of biological role, either a functional dehydrogenase or a non-functional fragment. This is an uncharacterized protein from Sinorhizobium fredii (strain NBRC 101917 / NGR234).